We begin with the raw amino-acid sequence, 143 residues long: UPF0201 protein Pisl_1658 (143 aa).

It belongs to the UPF0201 family.

This is UPF0201 protein Pisl_1658 from Pyrobaculum islandicum (strain DSM 4184 / JCM 9189 / GEO3).